The chain runs to 360 residues: Phosphate acyltransferase (360 aa).

Belongs to the PlsX family. As to quaternary structure, homodimer. Probably interacts with PlsY.

Its subcellular location is the cytoplasm. The enzyme catalyses a fatty acyl-[ACP] + phosphate = an acyl phosphate + holo-[ACP]. The protein operates within lipid metabolism; phospholipid metabolism. Its function is as follows. Catalyzes the reversible formation of acyl-phosphate (acyl-PO(4)) from acyl-[acyl-carrier-protein] (acyl-ACP). This enzyme utilizes acyl-ACP as fatty acyl donor, but not acyl-CoA. The sequence is that of Phosphate acyltransferase from Janthinobacterium sp. (strain Marseille) (Minibacterium massiliensis).